The sequence spans 570 residues: Sulfite reductase [NADPH] hemoprotein beta-component (570 aa).

[4Fe-4S] cluster is bound by residues cysteine 434, cysteine 440, cysteine 479, and cysteine 483. Position 483 (cysteine 483) interacts with siroheme.

The protein belongs to the nitrite and sulfite reductase 4Fe-4S domain family. In terms of assembly, alpha(8)-beta(8). The alpha component is a flavoprotein, the beta component is a hemoprotein. Siroheme serves as cofactor. It depends on [4Fe-4S] cluster as a cofactor.

The catalysed reaction is hydrogen sulfide + 3 NADP(+) + 3 H2O = sulfite + 3 NADPH + 4 H(+). It participates in sulfur metabolism; hydrogen sulfide biosynthesis; hydrogen sulfide from sulfite (NADPH route): step 1/1. Functionally, component of the sulfite reductase complex that catalyzes the 6-electron reduction of sulfite to sulfide. This is one of several activities required for the biosynthesis of L-cysteine from sulfate. The polypeptide is Sulfite reductase [NADPH] hemoprotein beta-component (Escherichia coli O6:H1 (strain CFT073 / ATCC 700928 / UPEC)).